Consider the following 171-residue polypeptide: Transcription factor pcr1 (171 aa).

The region spanning 10–73 (DEKRRRILER…FRLKSQLLAH (64 aa)) is the bZIP domain. Residues 12–51 (KRRRILERNRIAASKFRQKKKEWIKELEQTANAAFEQSKR) form a basic motif region. A leucine-zipper region spans residues 52-66 (LQLLLSQLQQEAFRL). The tract at residues 125-171 (QMHPSLQGLPPNQHPQMPPSSQQPNSDDVQQHMFSAAGLPRSLGGPI) is disordered. Low complexity predominate over residues 143–152 (PSSQQPNSDD).

It belongs to the bZIP family. Heterodimer of pcr1/mts2 and atf1/mts1.

The protein resides in the nucleus. In terms of biological role, involved in regulation of gene expression for sexual development. Binds and activates CRE sites (cAMP-response elements, also known as M26 meiotic recombination hotspots). The chain is Transcription factor pcr1 (pcr1) from Schizosaccharomyces pombe (strain 972 / ATCC 24843) (Fission yeast).